Consider the following 231-residue polypeptide: L-ribulose-5-phosphate 4-epimerase SgbE (231 aa).

Residues 27–28 (GN), 44–45 (SG), and 74–75 (SS) contribute to the substrate site. 3 residues coordinate Zn(2+): aspartate 76, histidine 95, and histidine 97. Aspartate 120 serves as the catalytic Proton donor/acceptor. Histidine 171 lines the Zn(2+) pocket. The active-site Proton donor/acceptor is the tyrosine 229.

This sequence belongs to the aldolase class II family. AraD/FucA subfamily. The cofactor is Zn(2+).

The catalysed reaction is L-ribulose 5-phosphate = D-xylulose 5-phosphate. In terms of biological role, catalyzes the interconversion of L-ribulose 5-phosphate (LRu5P) and D-xylulose 5-phosphate (D-Xu5P) via a retroaldol/aldol mechanism (carbon-carbon bond cleavage analogous to a class II aldolase reaction). May be involved in the utilization of 2,3-diketo-L-gulonate. The polypeptide is L-ribulose-5-phosphate 4-epimerase SgbE (Haemophilus influenzae (strain ATCC 51907 / DSM 11121 / KW20 / Rd)).